A 245-amino-acid polypeptide reads, in one-letter code: Tryptophan synthase alpha chain (245 aa).

Catalysis depends on proton acceptor residues glutamate 37 and aspartate 48.

This sequence belongs to the TrpA family. Tetramer of two alpha and two beta chains.

It catalyses the reaction (1S,2R)-1-C-(indol-3-yl)glycerol 3-phosphate + L-serine = D-glyceraldehyde 3-phosphate + L-tryptophan + H2O. It functions in the pathway amino-acid biosynthesis; L-tryptophan biosynthesis; L-tryptophan from chorismate: step 5/5. The alpha subunit is responsible for the aldol cleavage of indoleglycerol phosphate to indole and glyceraldehyde 3-phosphate. The polypeptide is Tryptophan synthase alpha chain (Saccharolobus solfataricus (strain ATCC 35092 / DSM 1617 / JCM 11322 / P2) (Sulfolobus solfataricus)).